The primary structure comprises 345 residues: Opioid-binding protein/cell adhesion molecule (345 aa).

The first 27 residues, 1 to 27 (MGVCGSLFQPWKCLVVVSLRLLFLVPT), serve as a signal peptide directing secretion. 3 consecutive Ig-like C2-type domains span residues 39 to 126 (PKAM…PKTS), 136 to 219 (PQIM…VKIT), and 223 to 310 (PPYI…ASIT). Residues Asn-44, Asn-70, and Asn-140 are each glycosylated (N-linked (GlcNAc...) asparagine). A disulfide bond links Cys-57 and Cys-115. 2 disulfides stabilise this stretch: Cys-157/Cys-202 and Cys-244/Cys-296. Asn-285, Asn-293, and Asn-306 each carry an N-linked (GlcNAc...) asparagine glycan. A lipid anchor (GPI-anchor amidated asparagine) is attached at Asn-322. Positions 323–345 (SASRALACLWLSGTLFAHFFIKF) are cleaved as a propeptide — removed in mature form.

This sequence belongs to the immunoglobulin superfamily. IgLON family.

The protein localises to the cell membrane. Its function is as follows. Binds opioids in the presence of acidic lipids; probably involved in cell contact. The protein is Opioid-binding protein/cell adhesion molecule (OPCML) of Bos taurus (Bovine).